We begin with the raw amino-acid sequence, 612 residues long: Probable methyltransferase PMT9 (612 aa).

Over 1 to 14 (MKHFRTERVRATPK) the chain is Cytoplasmic. Residues 15–35 (LFTYVLVGFIALLGLTCLYYG) traverse the membrane as a helical; Signal-anchor for type II membrane protein segment. At 36–612 (SSFAPGSRKS…LWSLPAISVS (577 aa)) the chain is on the lumenal side. 3 N-linked (GlcNAc...) asparagine glycosylation sites follow: Asn107, Asn383, and Asn562.

It belongs to the methyltransferase superfamily.

The protein resides in the golgi apparatus membrane. The sequence is that of Probable methyltransferase PMT9 from Arabidopsis thaliana (Mouse-ear cress).